Here is a 286-residue protein sequence, read N- to C-terminus: Aminoglycoside N(3)-acetyltransferase III (286 aa).

Belongs to the antibiotic N-acetyltransferase family.

The catalysed reaction is a 2-deoxystreptamine antibiotic + acetyl-CoA = an N(3)-acetyl-2-deoxystreptamine antibiotic + CoA + H(+). Resistance to antibiotics containing the 2-deoxy-streptamine ring including gentamicin, kanamycin, tobramycin, neomycin and apramycin. This is Aminoglycoside N(3)-acetyltransferase III (aacC3) from Salmonella sp.